We begin with the raw amino-acid sequence, 255 residues long: Lipoprotein-releasing system ATP-binding protein LolD 2 (255 aa).

An ABC transporter domain is found at 9–254 (LEARGIRKSY…SDSAKLETVA (246 aa)). An ATP-binding site is contributed by 45–52 (GRSGSGKS).

It belongs to the ABC transporter superfamily. Lipoprotein translocase (TC 3.A.1.125) family. In terms of assembly, the complex is composed of two ATP-binding proteins (LolD) and two transmembrane proteins (LolC and LolE).

It is found in the cell inner membrane. Part of the ABC transporter complex LolCDE involved in the translocation of mature outer membrane-directed lipoproteins, from the inner membrane to the periplasmic chaperone, LolA. Responsible for the formation of the LolA-lipoprotein complex in an ATP-dependent manner. This chain is Lipoprotein-releasing system ATP-binding protein LolD 2, found in Rhodopirellula baltica (strain DSM 10527 / NCIMB 13988 / SH1).